A 1453-amino-acid chain; its full sequence is NK-tumor recognition protein (1453 aa).

Positions 10 to 175 (HFDIEINREP…ADVRVIDCGV (166 aa)) constitute a PPIase cyclophilin-type domain. The tract at residues 187–625 (KKRKKPTCSE…RWKPGQKPWK (439 aa)) is disordered. The span at 195–213 (SEGSDSSSRSSSSSESSSE) shows a compositional bias: low complexity. Positions 221–240 (IRRRRHKRRPKVRHAKKRRK) are enriched in basic residues. Basic and acidic residues predominate over residues 259–286 (YSERSDVNEKRSVDSNTKREKPVVRPEE). Lysine 323 is covalently cross-linked (Glycyl lysine isopeptide (Lys-Gly) (interchain with G-Cter in SUMO2)). The span at 329–348 (SGRKIKGRGTIRYHTPPRSR) shows a compositional bias: basic residues. A phosphoserine mark is found at serine 379, serine 401, and serine 416. Residues 382–402 (KWSKGDKLSDPCSSRWDERSL) are compositionally biased toward basic and acidic residues. Residues 403–421 (SQRSRSWSYNGYYSDLSTA) are compositionally biased toward polar residues. The segment covering 425-460 (DGHHKKHRKEKKFKHKKKAKKQKHCRRHRQTKKRRI) has biased composition (basic residues). Positions 514 to 531 (SSRDSYRSKSHSRSDSRG) are enriched in basic and acidic residues. 2 stretches are compositionally biased toward low complexity: residues 532–546 (SSRSRAVSKSSSRSL) and 554–565 (SSRSGPRRTSIS). Glycyl lysine isopeptide (Lys-Gly) (interchain with G-Cter in SUMO2) cross-links involve residues lysine 576 and lysine 579. At serine 611 the chain carries Phosphoserine. A Glycyl lysine isopeptide (Lys-Gly) (interchain with G-Cter in SUMO2) cross-link involves residue lysine 637. At serine 646 the chain carries Phosphoserine. Residues 651-661 (TNIKATVSSSS) are compositionally biased toward polar residues. The tract at residues 651–1453 (TNIKATVSSS…RSPSESSRYS (803 aa)) is disordered. Residues lysine 654 and lysine 664 each participate in a glycyl lysine isopeptide (Lys-Gly) (interchain with G-Cter in SUMO2) cross-link. 2 stretches are compositionally biased toward low complexity: residues 682–726 (RSSG…SSRS) and 736–749 (SQHSRSSSYTSVSS). A compositionally biased stretch (basic residues) spans 755–772 (AMFRSNRKKSVTSHKRHR). A compositionally biased stretch (basic and acidic residues) spans 773-789 (SNSEKTLHSKYVRGREK). Over residues 799-809 (SRSSLDYSSDS) the composition is skewed to low complexity. Basic and acidic residues-rich tracts occupy residues 820–852 (PEKEKQGKVEALNDKQGKGREEGKPKPEWECPR) and 859–868 (KDHSRDDSVS). Serine 880, serine 882, serine 884, and serine 900 each carry phosphoserine. Basic and acidic residues predominate over residues 887 to 902 (DVTKSRKSDPRRGSEK). Acidic residues predominate over residues 903–913 (EEGEASSDSES). Residues 948-958 (SSASESESSCS) show a composition bias toward low complexity. Basic and acidic residues predominate over residues 966-982 (EPQKQKHSKDDLKGDHT). Residues 983–1005 (KRAREKSKAKKDKKHKAPKRKQA) are compositionally biased toward basic residues. Residues 1030–1045 (DPKEKRHVSEKCEAVK) show a composition bias toward basic and acidic residues. Serine 1139 and serine 1148 each carry phosphoserine. Residues 1170–1180 (QESSMSESKTL) are compositionally biased toward polar residues. The span at 1189–1199 (SSTSVTSPVET) shows a compositional bias: low complexity. Serine 1195 carries the phosphoserine modification. Glycyl lysine isopeptide (Lys-Gly) (interchain with G-Cter in SUMO2) cross-links involve residues lysine 1208 and lysine 1249. Positions 1303–1453 (RSPHRSRSKS…RSPSESSRYS (151 aa)) are arg/Ser tandem repeat-rich. A compositionally biased stretch (low complexity) spans 1322 to 1346 (SVSYSHSRSRSRSSTSSYRSRSYSR). Residues 1369–1379 (HSHRTSSRSRS) are compositionally biased toward basic residues. Positions 1380–1401 (RSSSYDLHSRSRSYTYDSYYSR) are enriched in low complexity. Over residues 1416–1426 (RGRSYNRRSRS) the composition is skewed to basic residues.

It localises to the cell membrane. It catalyses the reaction [protein]-peptidylproline (omega=180) = [protein]-peptidylproline (omega=0). With respect to regulation, inhibited by cyclosporin A (CsA). Its function is as follows. PPIase that catalyzes the cis-trans isomerization of proline imidic peptide bonds in oligopeptides and may therefore assist protein folding. Component of a putative tumor-recognition complex involved in the function of NK cells. The polypeptide is NK-tumor recognition protein (Mus musculus (Mouse)).